We begin with the raw amino-acid sequence, 447 residues long: Cysteine--tRNA ligase (447 aa).

Zn(2+) is bound at residue C28. The short motif at 30–40 (PTVYNYIHIGN) is the 'HIGH' region element. 3 residues coordinate Zn(2+): C211, H236, and E240. The 'KMSKS' region signature appears at 268–272 (KMSKS). K271 is an ATP binding site.

It belongs to the class-I aminoacyl-tRNA synthetase family. Monomer. Zn(2+) serves as cofactor.

The protein resides in the cytoplasm. The enzyme catalyses tRNA(Cys) + L-cysteine + ATP = L-cysteinyl-tRNA(Cys) + AMP + diphosphate. The protein is Cysteine--tRNA ligase of Streptococcus thermophilus (strain CNRZ 1066).